The primary structure comprises 716 residues: Probable extracellular serine carboxypeptidase (716 aa).

An N-terminal signal peptide occupies residues 1–17 (MVKLTACLLLLVAAVQA). N-linked (GlcNAc...) asparagine glycosylation is found at asparagine 143 and asparagine 174. Serine 188 (charge relay system) is an active-site residue. Asparagine 258 and asparagine 354 each carry an N-linked (GlcNAc...) asparagine glycan. Catalysis depends on aspartate 466, which acts as the Charge relay system. 2 N-linked (GlcNAc...) asparagine glycosylation sites follow: asparagine 507 and asparagine 550. Residues 617–636 (RDLAAQPSKSKKDRRGQQLS) form a disordered region. The helical transmembrane segment at 652 to 672 (LGFVSFLVFAFSSFTFIPDIE) threads the bilayer.

It belongs to the peptidase S28 family.

It localises to the membrane. It is found in the secreted. The chain is Probable extracellular serine carboxypeptidase from Arthroderma benhamiae (strain ATCC MYA-4681 / CBS 112371) (Trichophyton mentagrophytes).